A 144-amino-acid polypeptide reads, in one-letter code: Ribosome maturation factor RimP (144 aa).

This sequence belongs to the RimP family.

The protein localises to the cytoplasm. Its function is as follows. Required for maturation of 30S ribosomal subunits. The protein is Ribosome maturation factor RimP of Azoarcus sp. (strain BH72).